A 141-amino-acid chain; its full sequence is Protein archease (141 aa).

Residues aspartate 19 and aspartate 140 each coordinate Ca(2+).

It belongs to the archease family.

Its function is as follows. Activates the tRNA-splicing ligase complex by facilitating the enzymatic turnover of catalytic subunit RtcB. Acts by promoting the guanylylation of RtcB, a key intermediate step in tRNA ligation. Can also alter the NTP specificity of RtcB such that ATP, dGTP or ITP is used efficiently. This chain is Protein archease, found in Thermoplasma acidophilum (strain ATCC 25905 / DSM 1728 / JCM 9062 / NBRC 15155 / AMRC-C165).